The primary structure comprises 704 residues: Polyribonucleotide nucleotidyltransferase (704 aa).

2 residues coordinate Mg(2+): Asp-487 and Asp-493. A KH domain is found at 554–613; it reads PRLLTIKIHPDKIREVIGKGGSTIQAITKETGTQIDIQDDGTIIIASVNAIAAQAAKSRI. The S1 motif domain occupies 623–691; that stretch reads GRIYEGKVAK…KQGRIRLSIK (69 aa).

Belongs to the polyribonucleotide nucleotidyltransferase family. As to quaternary structure, component of the RNA degradosome, which is a multiprotein complex involved in RNA processing and mRNA degradation. It depends on Mg(2+) as a cofactor.

It localises to the cytoplasm. The catalysed reaction is RNA(n+1) + phosphate = RNA(n) + a ribonucleoside 5'-diphosphate. Involved in mRNA degradation. Catalyzes the phosphorolysis of single-stranded polyribonucleotides processively in the 3'- to 5'-direction. This is Polyribonucleotide nucleotidyltransferase from Xanthomonas axonopodis pv. citri (strain 306).